The following is a 427-amino-acid chain: Trigger factor (427 aa).

One can recognise a PPIase FKBP-type domain in the interval 163 to 248 (GDTVVIDFVG…IHEVKEKEVP (86 aa)).

The protein belongs to the FKBP-type PPIase family. Tig subfamily.

Its subcellular location is the cytoplasm. The catalysed reaction is [protein]-peptidylproline (omega=180) = [protein]-peptidylproline (omega=0). Its function is as follows. Involved in protein export. Acts as a chaperone by maintaining the newly synthesized protein in an open conformation. Functions as a peptidyl-prolyl cis-trans isomerase. This is Trigger factor from Streptococcus gordonii (strain Challis / ATCC 35105 / BCRC 15272 / CH1 / DL1 / V288).